The following is a 1968-amino-acid chain: Signal element on autosome protein 2 (1968 aa).

Positions 72-88 (TSSSFSSSLATTTTTSS) are enriched in low complexity. Disordered regions lie at residues 72–252 (TSSS…TPTQ) and 271–364 (QVQQ…VQEQ). The span at 107-119 (SHHHPSSSHHHHP) shows a compositional bias: basic residues. 4 stretches are compositionally biased toward low complexity: residues 120–134 (GQQQ…SHLQ), 144–165 (HPYY…YGQA), 219–232 (DQPS…LPPL), and 298–338 (LSSI…SSSS). The segment covering 346-362 (PNASSSSLIKRQSQDVQ) has biased composition (polar residues). The C2H2-type 1 zinc-finger motif lies at 413–440 (YQCPNCNRNLANARNLQRHRQTCGSAQH). 2 disordered regions span residues 451–499 (RSPP…LYSP) and 538–601 (WSRD…TLDP). Residues 452-467 (SPPPCASAPPVAPPTA) are compositionally biased toward pro residues. Positions 472 to 482 (FQHHNSTGNLT) are enriched in polar residues. Residues 483-498 (LSYSSSSSRHQSSLYS) show a composition bias toward low complexity. Basic and acidic residues predominate over residues 570–594 (PLHHLDSFDSADHRKETPRECHEPD). The segment at 651-672 (FTCEACKKSVSSERSLRRHYNT) adopts a C2H2-type 2; degenerate zinc-finger fold. Disordered regions lie at residues 681–712 (AASG…GPEK) and 785–854 (VTSA…TGNP). A compositionally biased stretch (basic residues) spans 690–702 (TTKRKPATKRPSK). The span at 794–804 (HQLPHQQPQQQ) shows a compositional bias: low complexity. Residues 812–824 (LLNEQDESADDDG) show a composition bias toward acidic residues. Low complexity predominate over residues 827-851 (RSSSGTVSNSTTTTTTATTTSSKST). A C2H2-type 3; degenerate zinc finger spans residues 856–875 (FTCEHCARQLCSMSNLKRHR). Disordered stretches follow at residues 882–905 (ASSS…TAPA), 975–1069 (GDAL…EHKN), 1083–1227 (RMDA…SPLD), and 1246–1273 (PGPL…SQQA). 3 stretches are compositionally biased toward low complexity: residues 981-1015 (QQHQ…AGRI), 1023-1046 (ILNQ…MLNP), and 1108-1131 (PQRS…YQVQ). Pro residues predominate over residues 1136-1146 (PLPPMQLPPLQ). Over residues 1147 to 1185 (NPHNQQQQHQMLHQSQMNYQQVQQVQQVQHVQQQQNLQN) the composition is skewed to low complexity. Polar residues-rich tracts occupy residues 1201–1211 (APGNRSRSHSN) and 1251–1273 (QGQS…SQQA). The C2H2-type 4 zinc-finger motif lies at 1274–1297 (YICPECKKTYASRKNVKRHRMAVH). 4 disordered regions span residues 1333 to 1478 (TPDS…ADEE), 1569 to 1608 (SVGL…QQQQ), 1624 to 1671 (HPPM…LTCS), and 1769 to 1822 (ADRQ…PSTN). The segment covering 1388–1403 (ERQEPPKKPVADDHKS) has biased composition (basic and acidic residues). Pro residues-rich tracts occupy residues 1407–1421 (PLPP…PPPY) and 1429–1445 (LNPP…PPLQ). Residues 1589–1608 (QHPQQHPQQHPQQHPQQQQQ) show a composition bias toward low complexity. Over residues 1624–1633 (HPPMPVSQQF) the composition is skewed to polar residues. A C2H2-type 5; degenerate zinc finger spans residues 1668-1694 (LTCSGCKKILGSDYSLRRHRAGCADVQ). The segment covering 1800-1811 (SSSSSSSTSSAS) has biased composition (low complexity). A C2H2-type 6 zinc finger spans residues 1826 to 1858 (HYCQFPECGKNFSSEWNLARHTRESCKMTTRAH).

Expressed in seam cells, intestine cells, pharyngeal muscles and nerve ring neurons.

The protein localises to the nucleus. Its subcellular location is the cytoplasm. Its function is as follows. RNA-binding protein, which regulates the expression of proteins required to control developmental timing of events during the L2 to L3 larval stage switch. Binds to the 3'UTR of the transcript of the heterochronic protein lin-28 to post-transcriptionally negatively regulate its expression in certain tissue types in the later larval stages. During larval development, controls the timing of seam cell division and terminal differentiation into adult alae. In vitro, it can also bind to DNA through its first zinc finger. May bind directly or indirectly to the promoter of the sex-determining factor xol-1 to activate its transcription. Its activation of xol-1 transcription controls sex determination and X chromosome dosage compensation to promote male development. Through the negative regulation of lin-28 transcript, it also has a role in the fox-1-sex-1-mediated determination of sexual fate. Acts in the intestine to play a role in regulating adult lifespan. The sequence is that of Signal element on autosome protein 2 from Caenorhabditis elegans.